Here is a 261-residue protein sequence, read N- to C-terminus: Indole-3-glycerol phosphate synthase (261 aa).

Belongs to the TrpC family.

It catalyses the reaction 1-(2-carboxyphenylamino)-1-deoxy-D-ribulose 5-phosphate + H(+) = (1S,2R)-1-C-(indol-3-yl)glycerol 3-phosphate + CO2 + H2O. It functions in the pathway amino-acid biosynthesis; L-tryptophan biosynthesis; L-tryptophan from chorismate: step 4/5. This is Indole-3-glycerol phosphate synthase from Burkholderia cenocepacia (strain HI2424).